The following is a 498-amino-acid chain: MSVKFEISFAKTVRLNGGLAILLKDADSESPAGAAGADPANVFAKAARIARFTAKGLSSLDIVAPEGSPVDRIIVIGTGRAKELNAHDWLKLGGAAAARIRNVEKAAIFIDLPGVQAGGKAAADFALGMLLRAYSFDTYKTKKGDDDDKNGAQKPVKVTIVTPDVAAAKKLFAASEAIADGVILARDLVNEPPNVLGPVEFAAKAKALEKLGVEVEILTEREMRRLGMGALLGVAQGSVRPPRLVIMQWKGGKAKEKPVAFIGKGVVFDTGGISIKPAAGMEDMKGDMGGAAAVTGLMHTLAARGAKVNAIGVIGLVENMPDGNAQRPGDIVTSMSGQTIEIINTDAEGRLVLCDALWYTNDRFKPQFMINLATLTGAILVALGNLQAGLFSNDDQLANQLTAAGLVTNERLWRMPLGKDYDKMIDSKFADMKNTGGRYAGSITAAQFLKRFVQETPWAHLDIAGTAMGSTLDEINQSWGSGFGVRLLDELVRENYES.

2 residues coordinate Mn(2+): lysine 264 and aspartate 269. Residue lysine 276 is part of the active site. Mn(2+) is bound by residues aspartate 287, aspartate 346, and glutamate 348. Residue arginine 350 is part of the active site.

The protein belongs to the peptidase M17 family. It depends on Mn(2+) as a cofactor.

It localises to the cytoplasm. It carries out the reaction Release of an N-terminal amino acid, Xaa-|-Yaa-, in which Xaa is preferably Leu, but may be other amino acids including Pro although not Arg or Lys, and Yaa may be Pro. Amino acid amides and methyl esters are also readily hydrolyzed, but rates on arylamides are exceedingly low.. It catalyses the reaction Release of an N-terminal amino acid, preferentially leucine, but not glutamic or aspartic acids.. Functionally, presumably involved in the processing and regular turnover of intracellular proteins. Catalyzes the removal of unsubstituted N-terminal amino acids from various peptides. The chain is Probable cytosol aminopeptidase from Rhizobium rhizogenes (strain K84 / ATCC BAA-868) (Agrobacterium radiobacter).